A 217-amino-acid chain; its full sequence is 3,4-dihydroxy-2-butanone 4-phosphate synthase (217 aa).

D-ribulose 5-phosphate contacts are provided by residues 37–38, Asp-42, 150–154, and Glu-174; these read RE and RGGHT. Glu-38 lines the Mg(2+) pocket. Mg(2+) is bound at residue His-153.

This sequence belongs to the DHBP synthase family. As to quaternary structure, homodimer. Mg(2+) is required as a cofactor. The cofactor is Mn(2+).

The catalysed reaction is D-ribulose 5-phosphate = (2S)-2-hydroxy-3-oxobutyl phosphate + formate + H(+). It functions in the pathway cofactor biosynthesis; riboflavin biosynthesis; 2-hydroxy-3-oxobutyl phosphate from D-ribulose 5-phosphate: step 1/1. Functionally, catalyzes the conversion of D-ribulose 5-phosphate to formate and 3,4-dihydroxy-2-butanone 4-phosphate. The protein is 3,4-dihydroxy-2-butanone 4-phosphate synthase of Salmonella arizonae (strain ATCC BAA-731 / CDC346-86 / RSK2980).